A 649-amino-acid chain; its full sequence is 2-hydroxyacyl-CoA lyase 2 (649 aa).

The chain crosses the membrane as a helical span at residues 2-21 (FHLIPFVVAFLLVFLTWFLI). A thiamine diphosphate-binding site is contributed by E84. The tract at residues 474-554 (DFVGSAAYIL…AIGVIGNDAC (81 aa)) is thiamine pyrophosphate binding. Residues D525 and N551 each coordinate Mg(2+).

Belongs to the TPP enzyme family. Mg(2+) serves as cofactor. It depends on thiamine diphosphate as a cofactor.

Its subcellular location is the endoplasmic reticulum membrane. It catalyses the reaction 2-hydroxyoctadecanoyl-CoA = heptadecanal + formyl-CoA. It carries out the reaction (2R)-hydroxyhexadecanoyl-CoA = pentadecanal + formyl-CoA. Endoplasmic reticulum 2-OH acyl-CoA lyase involved in the cleavage (C1 removal) reaction in the fatty acid alpha-oxydation in a thiamine pyrophosphate (TPP)-dependent manner. Involved in the phytosphingosine degradation pathway. The sequence is that of 2-hydroxyacyl-CoA lyase 2 (ilvbl) from Xenopus laevis (African clawed frog).